We begin with the raw amino-acid sequence, 781 residues long: DNA replication helicase (781 aa).

Glycine 64 to serine 71 is an ATP binding site.

Belongs to the herpesviridae helicase family. As to quaternary structure, associates with the primase and the primase-associated factor to form the helicase-primase complex.

The protein localises to the host nucleus. Functionally, this protein may be a helicase and is required for replication of viral DNA. Its function is as follows. Component of the helicase/primase complex. Unwinds the DNA at the replication forks and generates single-stranded DNA for both leading and lagging strand synthesis. The primase synthesizes short RNA primers on the lagging strand that the polymerase elongates using dNTPs. Possesses helicase-like motifs and therefore may act as the helicase subunit of the complex. This chain is DNA replication helicase, found in Saimiriine herpesvirus 2 (strain 11) (SaHV-2).